Reading from the N-terminus, the 458-residue chain is Chondroitin hydrolase (458 aa).

The signal sequence occupies residues 1–22 (MVIVWYHQLLLVLLIFIGAAKG). Positions 358 to 401 (NLDKCRMERCEGRGECYLPRPKTNPAIYNFACRCERPYFGKSCE) constitute an EGF-like domain. Cystine bridges form between Cys-362/Cys-373, Cys-367/Cys-389, and Cys-391/Cys-400.

Belongs to the glycosyl hydrolase 56 family.

Functionally, endo-beta-galactosaminidase that specifically hydrolyzes chondroitin, releasing GlcUA-beta-(1-&gt;3)-GalNAc-beta-(1-&gt;4)-GlcUA-beta-(1-&gt;3)-GalNAc as the main product. Also hydrolyzes to a lesser extent chondroitin sulfates (CS-A, CS-C) and hyaluronic acid. May regulate the function of chondroitin in cell division. The polypeptide is Chondroitin hydrolase (Caenorhabditis elegans).